The following is an 859-amino-acid chain: Low-density lipoprotein receptor-related protein 12 (859 aa).

The first 32 residues, 1–32, serve as a signal peptide directing secretion; it reads MACRWSTKESPRWRSALLLLFLAGVYGNGALA. The Extracellular segment spans residues 33–492; sequence EHSENVHISG…ENCPVIVPTR (460 aa). Cystine bridges form between C47/C76 and C103/C122. The 113-residue stretch at 47 to 159 folds into the CUB 1 domain; it reads CGETPEQIRA…KGFRLAYFSG (113 aa). N-linked (GlcNAc...) asparagine glycosylation occurs at N75. The N-linked (GlcNAc...) asparagine glycan is linked to N146. LDL-receptor class A domains lie at 165–201 and 214–255; these read NCAC…EICA and PCAY…IDCD. Intrachain disulfides connect C166/C178, C173/C191, C185/C200, C215/C232, C222/C245, C239/C254, and C259/C285. In terms of domain architecture, CUB 2 spans 259–372; the sequence is CGQWLKYFYG…RGFNATYQVD (114 aa). N284 and N366 each carry an N-linked (GlcNAc...) asparagine glycan. LDL-receptor class A domains follow at residues 374 to 411, 412 to 449, and 450 to 486; these read FCLP…TNCT, MCQK…KNCF, and FCQP…ENCP. Disulfide bonds link C375-C388, C382-C401, C395-C410, C413-C426, C420-C439, C433-C448, C451-C463, C458-C476, and C470-C485. An N-linked (GlcNAc...) asparagine glycan is attached at N409. N441 carries an N-linked (GlcNAc...) asparagine glycan. The helical transmembrane segment at 493 to 513 threads the bilayer; that stretch reads VITAAVIGSLICGLLLVIALG. Topologically, residues 514–859 are cytoplasmic; it reads CTCKLYSLRM…TSDDEALLLC (346 aa). 4 disordered regions span residues 623–678, 693–723, 748–770, and 801–823; these read ADGD…LPQK, ASSS…SPAR, SSLS…REDD, and DQGQ…SNRD. Composition is skewed to polar residues over residues 748–757 and 801–814; these read SSLSQNQSPL and DQGQ…NATN.

Belongs to the LDLR family. As to quaternary structure, may interact with RACK1, ZFYVE9 and NMRK2. Widely expressed in heart, skeletal muscle, brain, lung, placenta and pancreas, but not in tissues consisting of a large number of epithelial cells, such as liver and kidney. Expressed at very low levels in a number of tumor-derived cell lines.

It is found in the membrane. The protein localises to the coated pit. Probable receptor, which may be involved in the internalization of lipophilic molecules and/or signal transduction. May act as a tumor suppressor. This is Low-density lipoprotein receptor-related protein 12 (LRP12) from Homo sapiens (Human).